Reading from the N-terminus, the 273-residue chain is Multidrug-efflux transporter 2 regulator (273 aa).

The HTH merR-type domain occupies 8-77; that stretch reads YFTTGEFSKL…LKEIKCLIKG (70 aa). Residues 11–30 constitute a DNA-binding region (H-T-H motif); it reads TGEFSKLCRVKKQTLFHYDE.

Functionally, activates transcription of the blt gene in response to structurally dissimilar drugs. In Bacillus subtilis (strain 168), this protein is Multidrug-efflux transporter 2 regulator (bltR).